Here is a 655-residue protein sequence, read N- to C-terminus: Threonine--tRNA ligase (655 aa).

Positions 1–66 (MIDLVFPDGS…TGERKFEILT (66 aa)) constitute a TGS domain. Residues 248-540 (DHRKLGKTMD…LLENFAGALP (293 aa)) form a catalytic region. Residues Cys340, His391, and His517 each contribute to the Zn(2+) site.

Belongs to the class-II aminoacyl-tRNA synthetase family. In terms of assembly, homodimer. Requires Zn(2+) as cofactor.

Its subcellular location is the cytoplasm. It carries out the reaction tRNA(Thr) + L-threonine + ATP = L-threonyl-tRNA(Thr) + AMP + diphosphate + H(+). Its function is as follows. Catalyzes the attachment of threonine to tRNA(Thr) in a two-step reaction: L-threonine is first activated by ATP to form Thr-AMP and then transferred to the acceptor end of tRNA(Thr). Also edits incorrectly charged L-seryl-tRNA(Thr). The protein is Threonine--tRNA ligase of Caulobacter vibrioides (strain ATCC 19089 / CIP 103742 / CB 15) (Caulobacter crescentus).